The following is a 228-amino-acid chain: Orotate phosphoribosyltransferase (228 aa).

Position 26 (lysine 26) interacts with 5-phospho-alpha-D-ribose 1-diphosphate. Residue 34–35 (FF) coordinates orotate. 5-phospho-alpha-D-ribose 1-diphosphate-binding positions include 72–73 (YK), arginine 98, lysine 99, lysine 102, histidine 104, and 123–131 (DDVISAGTS). Residues serine 127 and arginine 155 each coordinate orotate.

Belongs to the purine/pyrimidine phosphoribosyltransferase family. PyrE subfamily. Homodimer. Mg(2+) is required as a cofactor.

It carries out the reaction orotidine 5'-phosphate + diphosphate = orotate + 5-phospho-alpha-D-ribose 1-diphosphate. It participates in pyrimidine metabolism; UMP biosynthesis via de novo pathway; UMP from orotate: step 1/2. Functionally, catalyzes the transfer of a ribosyl phosphate group from 5-phosphoribose 1-diphosphate to orotate, leading to the formation of orotidine monophosphate (OMP). The chain is Orotate phosphoribosyltransferase from Nitrosospira multiformis (strain ATCC 25196 / NCIMB 11849 / C 71).